The primary structure comprises 291 residues: E3 ubiquitin-protein ligase RZFP34 (291 aa).

A CHY-type zinc finger spans residues 20-96 (IGSGHYGCSH…VQQNCSNCGV (77 aa)). 24 residues coordinate Zn(2+): Cys-27, His-29, Cys-40, Cys-41, Cys-47, Cys-50, His-51, His-66, Cys-78, Cys-81, Cys-91, Cys-94, Cys-103, Cys-106, His-119, Cys-120, Cys-123, Cys-126, His-136, Cys-137, Cys-140, Cys-143, His-152, and Cys-154. The segment at 98–162 (MGKYFCSKCK…QCVEGAMHHN (65 aa)) adopts a CTCHY-type zinc-finger fold. The segment at 163–206 (CPVCFEYLFDSTRDITVLRCGHTMHLECTKDMGLHNRYTCPVCS) adopts an RING-type; atypical zinc-finger fold. Position 173 is a phosphoserine (Ser-173). Phosphothreonine is present on Thr-178. Ser-208 bears the Phosphoserine mark. Positions 271 to 291 (QRGSDSHSCSSGMPQVVGSTG) are disordered.

Interacts with SRK2D/2SNRK2.2, SRK2I/SNRK2.3 and SRK2E/SNRK2.6. Phosphorylated at Ser-173, Thr-178 and Ser-208 by SRK2E/SNRK2.6 in response to abscisic acid (ABA). Phosphorylation activates its E3 ubiquitin-protein ligase activity. Expressed in roots, leaves, and anthers and stigma of open flowers.

It localises to the nucleus. Its subcellular location is the cytoplasm. The protein resides in the endoplasmic reticulum. The enzyme catalyses S-ubiquitinyl-[E2 ubiquitin-conjugating enzyme]-L-cysteine + [acceptor protein]-L-lysine = [E2 ubiquitin-conjugating enzyme]-L-cysteine + N(6)-ubiquitinyl-[acceptor protein]-L-lysine.. It participates in protein modification; protein ubiquitination. Possesses E3 ubiquitin-protein ligase activity in vitro. Mediates mainly 'Lys-48'-linked polyubiquitination. Promotes abscisic acid (ABA)-induced stomatal closure, reactive oxygen species (ROS) production and drought tolerance. Involved in the regulation of stomatal aperture. This is E3 ubiquitin-protein ligase RZFP34 from Arabidopsis thaliana (Mouse-ear cress).